Reading from the N-terminus, the 90-residue chain is Hypnin-A3 (90 aa).

Its function is as follows. Lectin specific for core(alpha 1-6)fucosylated N-glycans. Inhibits platelet aggregation. The polypeptide is Hypnin-A3 (Hypnea japonica (Japanese red alga)).